The following is a 51-amino-acid chain: Insulin (51 aa).

3 disulfide bridges follow: C7–C37, C19–C50, and C36–C41.

Belongs to the insulin family. In terms of assembly, heterodimer of a B chain and an A chain linked by two disulfide bonds.

It is found in the secreted. Functionally, insulin decreases blood glucose concentration. It increases cell permeability to monosaccharides, amino acids and fatty acids. It accelerates glycolysis, the pentose phosphate cycle, and glycogen synthesis in liver. This chain is Insulin (INS), found in Saimiri sciureus (Common squirrel monkey).